We begin with the raw amino-acid sequence, 321 residues long: Beta-1,3-N-acetylglucosaminyltransferase manic fringe (321 aa).

Residues 1 to 7 (MQCRLPR) lie on the Cytoplasmic side of the membrane. Residues 8 to 27 (GLAGALLTLLCMGLLCLRYH) traverse the membrane as a helical; Signal-anchor for type II membrane protein segment. Topologically, residues 28–321 (LNLSPQRVQG…TPWCPQLGAR (294 aa)) are lumenal. R70 serves as a coordination point for substrate. N-linked (GlcNAc...) asparagine glycosylation occurs at N109. Disulfide bonds link C110–C121 and C139–C202. D143 provides a ligand contact to substrate. A Mn(2+)-binding site is contributed by D144. A glycan (N-linked (GlcNAc...) asparagine) is linked at N185. D232 is an active-site residue. H256 contributes to the Mn(2+) binding site. Residues C306 and C315 are joined by a disulfide bond.

This sequence belongs to the glycosyltransferase 31 family. Requires Mn(2+) as cofactor.

It localises to the golgi apparatus membrane. It carries out the reaction 3-O-(alpha-L-fucosyl)-L-threonyl-[EGF-like domain protein] + UDP-N-acetyl-alpha-D-glucosamine = 3-O-(N-acetyl-beta-D-glucosaminyl-(1-&gt;3)-alpha-L-fucosyl)-L-threonyl-[EGF-like domain protein] + UDP + H(+). The enzyme catalyses 3-O-(alpha-L-fucosyl)-L-seryl-[EGF-like domain protein] + UDP-N-acetyl-alpha-D-glucosamine = 3-O-(N-acetyl-beta-D-glucosaminyl-(1-&gt;3)-alpha-L-fucosyl)-L-seryl-[EGF-like domain protein] + UDP + H(+). In terms of biological role, glycosyltransferase that initiates the elongation of O-linked fucose residues attached to EGF-like repeats in the extracellular domain of Notch molecules. Modulates NOTCH1 activity by modifying O-fucose residues at specific EGF-like domains resulting in inhibition of NOTCH1 activation by JAG1 and enhancement of NOTCH1 activation by DLL1 via an increase in its binding to DLL1. This Homo sapiens (Human) protein is Beta-1,3-N-acetylglucosaminyltransferase manic fringe.